The primary structure comprises 402 residues: Nuclear hormone receptor family member nhr-96 (402 aa).

Positions 4–79 form a DNA-binding region, nuclear receptor; sequence FGLCAVCGQV…VGMDVKKIQQ (76 aa). NR C4-type zinc fingers lie at residues 7–27 and 44–67; these read CAVC…CRSC and CVKA…LKRC. The region spanning 154–402 is the NR LBD domain; the sequence is NYYNSLELLT…FSDPEMFELT (249 aa).

This sequence belongs to the nuclear hormone receptor family.

It is found in the nucleus. Its function is as follows. Orphan nuclear receptor. The sequence is that of Nuclear hormone receptor family member nhr-96 (nhr-96) from Caenorhabditis elegans.